We begin with the raw amino-acid sequence, 206 residues long: uncharacterized protein (206 aa).

The chain crosses the membrane as a helical span at residues 21–43; the sequence is VPINITMSICALTALLKSYSITG.

Its subcellular location is the membrane. This is an uncharacterized protein from Acanthamoeba polyphaga (Amoeba).